Consider the following 339-residue polypeptide: MIFIDACFRKETPYTPIWMMRQAGRYLREYQESRKKAGSFLELCKNSDLATEVTLQPVEILGVDAAILFSDILVVPLEMGLNLEFIPKKGPHFLETITDLKSVENLKVGAYKQLNYVYDTISQTRQKLSKEKALIGFCGSPWTLATYMIEGEGSKSYAKSKKMLYSEPEVLKALLEKLSLELIEYLSLQIQAGVNAVMIFDSWASALEKEAYLKFSWDYLKKISKELKKRYAHIPVILFPKGIGAYLDSIDGEFDVFGVDWGTPLTAAKKILGGKYVLQGNLEPTRLYDKNALEEGVEGILKVMGNQGHIFNLGHGMLPDLPRENAKYLVQLVHAKTRR.

Residues 21–25 (RQAGR), Asp71, Tyr147, Ser202, and His315 each bind substrate.

Belongs to the uroporphyrinogen decarboxylase family. In terms of assembly, homodimer.

The protein localises to the cytoplasm. It carries out the reaction uroporphyrinogen III + 4 H(+) = coproporphyrinogen III + 4 CO2. The protein operates within porphyrin-containing compound metabolism; protoporphyrin-IX biosynthesis; coproporphyrinogen-III from 5-aminolevulinate: step 4/4. In terms of biological role, catalyzes the decarboxylation of four acetate groups of uroporphyrinogen-III to yield coproporphyrinogen-III. The polypeptide is Uroporphyrinogen decarboxylase (Helicobacter pylori (strain HPAG1)).